Reading from the N-terminus, the 855-residue chain is Mitofusin FZO1 (855 aa).

Residues 1-19 (MSEGKQQFKDSNKPHKDST) are compositionally biased toward basic and acidic residues. Residues 1 to 27 (MSEGKQQFKDSNKPHKDSTDQDDDAAT) are disordered. Residues 1–705 (MSEGKQQFKD…PSLLFTSKIP (705 aa)) lie on the Cytoplasmic side of the membrane. Residues 91-190 (NYNNNRVLLK…KRVDDVSSKV (100 aa)) form an HRN region. Residues 184–467 (DDVSSKVFIT…KKRSLSKLLP (284 aa)) form the Dynamin-type G domain. Residues 197–202 (NTGKSA) and 370–373 (KKFD) contribute to the GTP site. Lysine 398 is covalently cross-linked (Glycyl lysine isopeptide (Lys-Gly) (interchain with G-Cter in ubiquitin)). Residue serine 408 participates in GTP binding. The segment covering 413–433 (ELPHYHNENDNEDHGDRKPDD) has biased composition (basic and acidic residues). Residues 413–447 (ELPHYHNENDNEDHGDRKPDDDPYSSSDPDPDFDS) are disordered. Residue lysine 464 forms a Glycyl lysine isopeptide (Lys-Gly) (interchain with G-Cter in ubiquitin) linkage. The tract at residues 484 to 547 (KSNMKMYSEE…KEALLNALDV (64 aa)) is HR1. The tract at residues 630-843 (GKRLKVSLSI…QSLYEGTVAQ (214 aa)) is required for interaction with UGO1. Residues 706–726 (TLTLYFLGSTKVVGNIILNGI) form a helical membrane-spanning segment. Topologically, residues 727–736 (KLSSWSSLKK) are mitochondrial intermembrane. A helical membrane pass occupies residues 737-757 (LSVPVIVVGSLLGLTYLIHDL). Residues 758–855 (PRALPMNLSI…MVEEINLDID (98 aa)) lie on the Cytoplasmic side of the membrane. The HR2 stretch occupies residues 769-831 (YKRKLQELDY…KKESNLLSIK (63 aa)). Residues 798–825 (TREILRSCEIIMDKKQITKKELENKKES) are a coiled coil.

The protein belongs to the TRAFAC class dynamin-like GTPase superfamily. Dynamin/Fzo/YdjA family. Mitofusin subfamily. In terms of assembly, homodimer. Dimerization depends on GTP binding. Component of a large multiprotein complex of 800 kDa. Binds the cytoplasmic domain of UGO1 which binds MGM1 through its intermembrane space domain. Interacts with MDM30. Interacts with UBP2 and UBP12. Interacts (when ubiquitinated) with DOA1; the interaction recruits FZO1 to CDC48 and promotes FZO1 proteasomal degradation. Post-translationally, ubiquitinated at Lys-398 and Lys-464. MDM30 and UGO1 are involved in ubiquitination. Deubiquitinated by UBP2 and UBP12. UBP2 and UBP12 recognize distinct ubiquitin chains on FZO1 that have opposing effects on mitochondrial fusion. UBP2 removes ubiquitin chains that initiate proteolysis of FZO1 and inhibit fusion. UBP12 recognizes ubiquitin chains that stabilize FZO1 and promote mitochondrial fusion. UBP12 deubiquitylates FZO1 only after oligomerization.

It localises to the mitochondrion outer membrane. It carries out the reaction GTP + H2O = GDP + phosphate + H(+). Its function is as follows. Essential transmembrane GTPase, which mediates mitochondrial fusion. Fusion proceeds through several steps; first mitochondria are tethered together, then brought into close contact, followed by the formation of a docking ring around contact areas, and finally membrane fusion. Fusion of mitochondria occurs in many cell types and constitutes an important step in mitochondrial morphology, which is balanced between fusion and fission, mediated by FZO1 and DNM1, respectively. Functions antagonistically with DNM1. Probably acts by forming membrane contact sites that mediate mitochondrial membrane fusion. Mitochondrial docking and fusion requires GTP hydrolysis. Mitochondrial fusion also promotes increased lifespan. This is Mitofusin FZO1 (FZO1) from Saccharomyces cerevisiae (strain ATCC 204508 / S288c) (Baker's yeast).